The primary structure comprises 247 residues: tRNA (guanine-N(1)-)-methyltransferase (247 aa).

S-adenosyl-L-methionine contacts are provided by residues glycine 115 and 135 to 140; that span reads IGDYVL.

Belongs to the RNA methyltransferase TrmD family. Homodimer.

The protein resides in the cytoplasm. The enzyme catalyses guanosine(37) in tRNA + S-adenosyl-L-methionine = N(1)-methylguanosine(37) in tRNA + S-adenosyl-L-homocysteine + H(+). Functionally, specifically methylates guanosine-37 in various tRNAs. This Alkaliphilus metalliredigens (strain QYMF) protein is tRNA (guanine-N(1)-)-methyltransferase.